An 86-amino-acid chain; its full sequence is Large ribosomal subunit protein bL31m (86 aa).

The transit peptide at 1–18 (MKCSLRLFEKAGRLSVRS) directs the protein to the mitochondrion.

Belongs to the bacterial ribosomal protein bL31 family. Highly divergent. Component of the mitochondrial large ribosomal subunit (mt-LSU). Mature yeast 74S mitochondrial ribosomes consist of a small (37S) and a large (54S) subunit. The 37S small subunit contains a 15S ribosomal RNA (15S mt-rRNA) and at least 32 different proteins. The 54S large subunit contains a 21S rRNA (21S mt-rRNA) and at least 45 different proteins.

It localises to the mitochondrion. Component of the mitochondrial ribosome (mitoribosome), a dedicated translation machinery responsible for the synthesis of mitochondrial genome-encoded proteins, including at least some of the essential transmembrane subunits of the mitochondrial respiratory chain. The mitoribosomes are attached to the mitochondrial inner membrane and translation products are cotranslationally integrated into the membrane. This chain is Large ribosomal subunit protein bL31m (tam9), found in Schizosaccharomyces pombe (strain 972 / ATCC 24843) (Fission yeast).